The sequence spans 20 residues: Thrombin-like enzyme okinaxobin-2 (20 aa).

One can recognise a Peptidase S1 domain in the interval 1-20; it reads VVGGDECNINEHRFLVALYY.

Belongs to the peptidase S1 family. Snake venom subfamily. In terms of assembly, monomer. Glycosylated. As to expression, expressed by the venom gland.

It localises to the secreted. Strongly inactivated by diisopropylfluorophosphate (DFP) and to a lesser extent by tosyl-L-lysine chloromethyl ketone (TLCK). In terms of biological role, thrombin-like snake venom serine protease. Releases both fibrinopeptides A and B from fibrinogen (FGA and FGB) to form fibrin clots. The sequence is that of Thrombin-like enzyme okinaxobin-2 from Ovophis okinavensis (Ryukyu Island pit viper).